The sequence spans 159 residues: Putative transmembrane protein ORF159 (159 aa).

The next 2 membrane-spanning stretches (helical) occupy residues 20-40 (LLLS…LSLF) and 59-79 (IIAV…GFCC). Positions 106 to 108 (RGD) match the Cell attachment site motif.

It is found in the host membrane. The protein is Putative transmembrane protein ORF159 of Acidianus sp. F28 (AFV-2).